Consider the following 102-residue polypeptide: Large ribosomal subunit protein bL21 (102 aa).

It belongs to the bacterial ribosomal protein bL21 family. In terms of assembly, part of the 50S ribosomal subunit. Contacts protein L20.

Functionally, this protein binds to 23S rRNA in the presence of protein L20. This is Large ribosomal subunit protein bL21 from Listeria innocua serovar 6a (strain ATCC BAA-680 / CLIP 11262).